Reading from the N-terminus, the 342-residue chain is MAATSEKQNTTKPPPSPSPLRNSKFCQPNMRILISGGAGFIGSHLVDKLMENEKNEVVVADNYFTGSKENLKKWIGHPRFELIRHDVTEPLLIEVDRIYHLACPASPIFYKYNPVKTIKTNVIGTLNMLGLAKRVGARILLTSTSEVYGDPLIHPQPESYWGNVNPIGVRSCYDEGKRVAETLMFDYHRQHGIEIRIARIFNTYGPRMNIDDGRVVSNFIAQALRGEALTVQKPGTQTRSFCYVSDMVDGLIRLMEGNDTGPINIGNPGEFTMVELAETVKELINPSIEIKMVENTPDDPRQRKPDISKAKEVLGWEPKVKLREGLPLMEEDFRLRLNVPRN.

A compositionally biased stretch (polar residues) spans 1–11 (MAATSEKQNTT). The segment at 1–22 (MAATSEKQNTTKPPPSPSPLRN) is disordered. 61 to 86 (DNYFTGSKENLKKWIGHPRFELIRHD) lines the NAD(+) pocket. R170 contacts substrate. Y173 functions as the Proton acceptor in the catalytic mechanism. 173–177 (YDEGK) serves as a coordination point for NAD(+). N202 contacts substrate. An NAD(+)-binding site is contributed by R214. Residues 215-219 (VVSNF), 232-239 (QKPGTQTR), and 299-303 (DPRQR) each bind substrate.

Belongs to the NAD(P)-dependent epimerase/dehydratase family. UDP-glucuronic acid decarboxylase subfamily. The cofactor is NAD(+). In terms of tissue distribution, ubiquitous.

The protein resides in the cytoplasm. The catalysed reaction is UDP-alpha-D-glucuronate + H(+) = UDP-alpha-D-xylose + CO2. The protein operates within nucleotide-sugar biosynthesis; UDP-alpha-D-xylose biosynthesis; UDP-alpha-D-xylose from UDP-alpha-D-glucuronate: step 1/1. Its function is as follows. Catalyzes the NAD-dependent decarboxylation of UDP-glucuronic acid to UDP-xylose. Necessary for the biosynthesis of the core tetrasaccharide in glycosaminoglycan biosynthesis. The sequence is that of UDP-glucuronic acid decarboxylase 3 (UXS3) from Arabidopsis thaliana (Mouse-ear cress).